The following is a 66-amino-acid chain: Large ribosomal subunit protein uL29 (66 aa).

This sequence belongs to the universal ribosomal protein uL29 family.

The protein is Large ribosomal subunit protein uL29 of Francisella tularensis subsp. holarctica (strain LVS).